A 433-amino-acid chain; its full sequence is Type I acyl-CoA thioesterase mpaH (433 aa).

The segment at 58-246 (HGVGLPKELY…VKARFDAAAD (189 aa)) is abhydrolase domain. Residue valine 60 coordinates substrate. Residue serine 139 is the Nucleophile of the active site. Phenylalanine 140 contacts substrate. Catalysis depends on residues aspartate 163 and histidine 365.

This sequence belongs to the AB hydrolase superfamily. MpaH hydrolase family. As to quaternary structure, homodimer.

It localises to the peroxisome matrix. It carries out the reaction mycophenolyl-CoA + H2O = mycophenolate + CoA + H(+). It functions in the pathway secondary metabolite biosynthesis; terpenoid biosynthesis. Functionally, type I acyl-CoA thioesterase; part of the gene cluster that mediates the biosynthesis of mycophenolic acid (MPA), the first isolated antibiotic natural product in the world obtained from a culture of Penicillium brevicompactum in 1893. MpaH acts as a peroxisomal acyl-CoA hydrolase that converts MPA-CoA into the final product MPA. The first step of the pathway is the synthesis of 5-methylorsellinic acid (5MOA) by the cytosolic polyketide synthase mpaC. 5MOA is then converted to the phthalide compound 5,7-dihydroxy-4,6-dimethylphthalide (DHMP) by the endoplasmic reticulum-bound cytochrome P450 monooxygenase mpaDE. MpaDE first catalyzes hydroxylation of 5-MOA to 4,6-dihydroxy-2-(hydroxymethyl)-3-methylbenzoic acid (DHMB). MpaDE then acts as a lactone synthase that catalyzes the ring closure to convert DHMB into DHMP. The next step is the prenylation of DHMP by the Golgi apparatus-associated prenyltransferase mpaA to yield farnesyl-DHMP (FDHMP). The ER-bound oxygenase mpaB then mediates the oxidative cleavage the C19-C20 double bond in FDHMP to yield FDHMP-3C via a mycophenolic aldehyde intermediate. The O-methyltransferase mpaG catalyzes the methylation of FDHMP-3C to yield MFDHMP-3C. After the cytosolic methylation of FDHMP-3C, MFDHMP-3C enters into peroxisomes probably via free diffusion due to its low molecular weight. Upon a peroxisomal CoA ligation reaction, catalyzed by a beta-oxidation component enzyme acyl-CoA ligase ACL891, MFDHMP-3C-CoA would then be restricted to peroxisomes for the following beta-oxidation pathway steps. The peroxisomal beta-oxidation machinery than converts MFDHMP-3C-CoA into MPA_CoA, via a beta-oxidation chain-shortening process. Finally mpaH acts as a peroxisomal acyl-CoA hydrolase with high substrate specificity toward MPA-CoA to release the final product MPA. This chain is Type I acyl-CoA thioesterase mpaH, found in Penicillium roqueforti (strain FM164).